The chain runs to 43 residues: Omega-agatoxin-Aa3c (43 aa).

3 disulfides stabilise this stretch: C2–C19, C9–C25, and C27–C38.

Belongs to the neurotoxin 04 (omega-agtx) family. 03 (type II/III omega-agtx) subfamily. Expressed by the venom gland.

The protein resides in the secreted. In terms of biological role, omega-agatoxins are antagonists of voltage-gated calcium channels (Cav). This chain is Omega-agatoxin-Aa3c, found in Agelenopsis aperta (North American funnel-web spider).